Here is an 86-residue protein sequence, read N- to C-terminus: Small ribosomal subunit protein uS17 (86 aa).

The protein belongs to the universal ribosomal protein uS17 family. In terms of assembly, part of the 30S ribosomal subunit.

Its function is as follows. One of the primary rRNA binding proteins, it binds specifically to the 5'-end of 16S ribosomal RNA. This chain is Small ribosomal subunit protein uS17, found in Lactococcus lactis subsp. cremoris (strain MG1363).